We begin with the raw amino-acid sequence, 394 residues long: ATP phosphoribosyltransferase regulatory subunit (394 aa).

It belongs to the class-II aminoacyl-tRNA synthetase family. HisZ subfamily. Heteromultimer composed of HisG and HisZ subunits.

The protein localises to the cytoplasm. The protein operates within amino-acid biosynthesis; L-histidine biosynthesis; L-histidine from 5-phospho-alpha-D-ribose 1-diphosphate: step 1/9. Functionally, required for the first step of histidine biosynthesis. May allow the feedback regulation of ATP phosphoribosyltransferase activity by histidine. This chain is ATP phosphoribosyltransferase regulatory subunit, found in Geobacillus thermodenitrificans (strain NG80-2).